A 310-amino-acid polypeptide reads, in one-letter code: GMP synthase [glutamine-hydrolyzing] subunit B (310 aa).

Positions 2–185 (FKTEPFIEES…LGLPDQIAHR (184 aa)) constitute a GMPS ATP-PPase domain. Position 29 to 35 (29 to 35 (SGGVDSS)) interacts with ATP.

Heterodimer composed of a glutamine amidotransferase subunit (A) and a GMP-binding subunit (B).

It carries out the reaction XMP + L-glutamine + ATP + H2O = GMP + L-glutamate + AMP + diphosphate + 2 H(+). The protein operates within purine metabolism; GMP biosynthesis; GMP from XMP (L-Gln route): step 1/1. In terms of biological role, catalyzes the synthesis of GMP from XMP. The chain is GMP synthase [glutamine-hydrolyzing] subunit B from Methanococcus maripaludis (strain C7 / ATCC BAA-1331).